The following is a 725-amino-acid chain: Threonine--tRNA ligase, cytoplasmic (725 aa).

In terms of domain architecture, TGS spans 80–142 (EPIQITLPDG…EGNAKLELLK (63 aa)).

Belongs to the class-II aminoacyl-tRNA synthetase family.

It localises to the cytoplasm. It carries out the reaction tRNA(Thr) + L-threonine + ATP = L-threonyl-tRNA(Thr) + AMP + diphosphate + H(+). In Caenorhabditis elegans, this protein is Threonine--tRNA ligase, cytoplasmic.